We begin with the raw amino-acid sequence, 371 residues long: LIM domain-binding protein 2 (371 aa).

Disordered regions lie at residues 244–289 (APPA…AAAN) and 325–371 (QYDA…QASQ). Low complexity predominate over residues 263 to 289 (STSSTSNSSAGNNANSTNSKKKSAAAN). One can recognise an LIM interaction domain (LID) domain in the interval 296–335 (DVMVVGEPTLMGGEFGDEDERLITRLENTQYDAANGMDDE). The span at 339-371 (NNSPALGNNSPWNSKPPANQETKSENPTPQASQ) shows a compositional bias: polar residues.

This sequence belongs to the LDB family. First expressed at stages 15-16 in presumptive limb mesoderm. As limb outgrowth proceeds, expressed in the entire limb bud, concentrating in the distal mesoderm throughout limb development. Both hindlimbs and forelimbs exhibit similar expression patterns.

The protein localises to the nucleus. Its function is as follows. Binds to the LIM domain of a wide variety of LIM domain-containing transcription factors. This Gallus gallus (Chicken) protein is LIM domain-binding protein 2 (LDB2).